The following is a 137-amino-acid chain: Ig heavy chain V region MOPC 315 (137 aa).

The first 18 residues, 1–18 (MKVLSLLYLLTAIPGIMS), serve as a signal peptide directing secretion. Residues 19–48 (DVQLQESGPGLVKPSQSLSLTCSVTGYSIT) form a framework-1 region. A disulfide bridge connects residues Cys-40 and Cys-114. The complementarity-determining-1 stretch occupies residues 49–54 (SGYFWN). Residues 55–68 (WIRQFPGNKLEWLG) form a framework-2 region. The segment at 69–84 (FIKYDGSNGYNPSLKN) is complementarity-determining-2. The segment at 85 to 116 (RVSITRDTSENQFFLKLNSVTTEDTATYYCAG) is framework-3. The complementarity-determining-3 stretch occupies residues 117–126 (DNDHLYYFDY). Residues 127–137 (WGQGTTLTVSS) form a framework-4 region.

This Mus musculus (Mouse) protein is Ig heavy chain V region MOPC 315.